A 686-amino-acid chain; its full sequence is MEIDAVPMSDTPRKILVTSALPYANGPIHLGHLLEYIQTDIWVRFQKLRGQQCIYVCADDAHGTAIMLKAEENGVTPEQQIAQVKADHERDFADFQVNFDNYYSTHSPENRALSEMVFQRNKDAGYILEKTITQLYDPQKGMFLADRFVKGTCPKCKSEDQYGDNCEVCGATYTPAELIEPYSSVSGATPVEKETTQLFFDLPKFEALLREWTRSGALQEQVANKLQEWIEDLQPWDISREAPYFGFEIPGYPGKYFYVWLDAPIGYMASFQNYCDREGLSFDDYWGKESTAELYHFIGKDIINFHGLFWPAMLDGAGLRKPTAIYSHGFVTVNGAKMSKSRGTFIKARTYLDHLSPEYLRYYFAAKLSSRVDDFDLNLEDFAQRVNSDLVGKLVNIASRTGNFVKKFGGTLSTELDNMMLVREVQEAGPRIADFYEKREFGKAMREIMALADHANVYIADKAPWSLSKEEGKEQEVLAICSTAINVFRLLVIYLKPVLPALAERAEAFMQVEPLTWADSEQLLLGHEIAKFKPLLSRVDMAQVESMLEDSKESTPAPAAAKPKKAATQKADAADNDETISIDDFLKVKLRVARVAKAAHVDGADKLLQLTLDVGELGQRNVFAGIKARYAPEELEGKLVVLVANLAPRKMKFGISEGMVLAAGPGGDDIHILSPDSGAEPGMEVR.

Residues 22–32 (PYANGPIHLGH) carry the 'HIGH' region motif. Positions 153, 156, 166, and 169 each coordinate Zn(2+). Residues 337–341 (KMSKS) carry the 'KMSKS' region motif. Lysine 340 is an ATP binding site. The tract at residues 547–573 (MLEDSKESTPAPAAAKPKKAATQKADA) is disordered. The tRNA-binding domain maps to 584 to 686 (DFLKVKLRVA…SGAEPGMEVR (103 aa)).

Belongs to the class-I aminoacyl-tRNA synthetase family. MetG type 1 subfamily. As to quaternary structure, homodimer. It depends on Zn(2+) as a cofactor.

The protein localises to the cytoplasm. The enzyme catalyses tRNA(Met) + L-methionine + ATP = L-methionyl-tRNA(Met) + AMP + diphosphate. In terms of biological role, is required not only for elongation of protein synthesis but also for the initiation of all mRNA translation through initiator tRNA(fMet) aminoacylation. The chain is Methionine--tRNA ligase from Alcanivorax borkumensis (strain ATCC 700651 / DSM 11573 / NCIMB 13689 / SK2).